The following is a 93-amino-acid chain: UPF0358 protein BLi01701/BL02974 (93 aa).

Belongs to the UPF0358 family.

The sequence is that of UPF0358 protein BLi01701/BL02974 from Bacillus licheniformis (strain ATCC 14580 / DSM 13 / JCM 2505 / CCUG 7422 / NBRC 12200 / NCIMB 9375 / NCTC 10341 / NRRL NRS-1264 / Gibson 46).